The primary structure comprises 109 residues: Small ribosomal subunit protein eS25 (109 aa).

Positions 1–13 (MVKKIQESKEKKA) are enriched in basic and acidic residues. The disordered stretch occupies residues 1 to 34 (MVKKIQESKEKKALKAASGTRKDKKKWGDGRKKE).

Belongs to the eukaryotic ribosomal protein eS25 family.

This Encephalitozoon cuniculi (strain GB-M1) (Microsporidian parasite) protein is Small ribosomal subunit protein eS25 (RPS25-1).